The primary structure comprises 741 residues: Zinc finger protein 425 (741 aa).

The KRAB domain maps to 1–69 (DDVALYFSGQ…EQGCLDKTRR (69 aa)). Disordered stretches follow at residues 67–86 (TRRT…DTGK) and 128–169 (RRDT…TPGR). The span at 132 to 151 (FQSPSLQETEIPNKKVSITA) shows a compositional bias: polar residues. Basic and acidic residues predominate over residues 153-168 (DPDKKDLRHKPRETPG). 19 consecutive C2H2-type zinc fingers follow at residues 179–201 (YSCY…KRSH), 235–257 (FQCS…QVVH), 263–285 (YPCP…LCLH), 291–313 (FCCG…LRLH), 319–341 (FQCP…LSQH), 347–369 (FHCP…QRTH), 375–397 (FSCD…IRVH), 403–425 (FSCP…GLQH), 431–453 (FQCP…QRLH), 459–481 (FPCA…TRVH), 487–509 (FPCG…LKVH), 515–537 (FSCA…TRLH), 543–565 (FQCP…QRMH), 571–593 (FACS…LRLH), 599–621 (YQCP…LLQH), 627–649 (FSCV…IRVH), 655–677 (FQCP…LYTH), 683–705 (FQCP…LCLH), and 711–733 (FSCD…IAVH).

This sequence belongs to the krueppel C2H2-type zinc-finger protein family.

The protein resides in the nucleus. The protein localises to the cytoplasm. In terms of biological role, acts as a transcriptional repressor. In Macaca fascicularis (Crab-eating macaque), this protein is Zinc finger protein 425 (ZNF425).